A 199-amino-acid chain; its full sequence is Pneumococcal vaccine antigen A homolog (199 aa).

The protein resides in the cell surface. The protein is Pneumococcal vaccine antigen A homolog (pvaA) of Streptococcus pyogenes serotype M1.